The chain runs to 243 residues: Leucyl/phenylalanyl-tRNA--protein transferase (243 aa).

Belongs to the L/F-transferase family.

It is found in the cytoplasm. It catalyses the reaction N-terminal L-lysyl-[protein] + L-leucyl-tRNA(Leu) = N-terminal L-leucyl-L-lysyl-[protein] + tRNA(Leu) + H(+). It carries out the reaction N-terminal L-arginyl-[protein] + L-leucyl-tRNA(Leu) = N-terminal L-leucyl-L-arginyl-[protein] + tRNA(Leu) + H(+). The catalysed reaction is L-phenylalanyl-tRNA(Phe) + an N-terminal L-alpha-aminoacyl-[protein] = an N-terminal L-phenylalanyl-L-alpha-aminoacyl-[protein] + tRNA(Phe). Its function is as follows. Functions in the N-end rule pathway of protein degradation where it conjugates Leu, Phe and, less efficiently, Met from aminoacyl-tRNAs to the N-termini of proteins containing an N-terminal arginine or lysine. The sequence is that of Leucyl/phenylalanyl-tRNA--protein transferase from Saccharophagus degradans (strain 2-40 / ATCC 43961 / DSM 17024).